The following is a 97-amino-acid chain: Large ribosomal subunit protein eL21 (97 aa).

Belongs to the eukaryotic ribosomal protein eL21 family.

This is Large ribosomal subunit protein eL21 from Methanoculleus marisnigri (strain ATCC 35101 / DSM 1498 / JR1).